We begin with the raw amino-acid sequence, 379 residues long: Succinyl-diaminopimelate desuccinylase (379 aa).

Zn(2+) is bound at residue histidine 70. Aspartate 72 is a catalytic residue. A Zn(2+)-binding site is contributed by aspartate 103. Glutamate 137 acts as the Proton acceptor in catalysis. Glutamate 138, glutamate 166, and histidine 352 together coordinate Zn(2+).

Belongs to the peptidase M20A family. DapE subfamily. Homodimer. It depends on Zn(2+) as a cofactor. Co(2+) serves as cofactor.

The enzyme catalyses N-succinyl-(2S,6S)-2,6-diaminopimelate + H2O = (2S,6S)-2,6-diaminopimelate + succinate. It participates in amino-acid biosynthesis; L-lysine biosynthesis via DAP pathway; LL-2,6-diaminopimelate from (S)-tetrahydrodipicolinate (succinylase route): step 3/3. Functionally, catalyzes the hydrolysis of N-succinyl-L,L-diaminopimelic acid (SDAP), forming succinate and LL-2,6-diaminopimelate (DAP), an intermediate involved in the bacterial biosynthesis of lysine and meso-diaminopimelic acid, an essential component of bacterial cell walls. The polypeptide is Succinyl-diaminopimelate desuccinylase (Burkholderia orbicola (strain MC0-3)).